A 331-amino-acid polypeptide reads, in one-letter code: Fructose-1,6-bisphosphatase class 1 (331 aa).

Mg(2+) contacts are provided by Glu100, Asp120, Leu122, and Asp123. Substrate is bound by residues 123–126, Asn216, Tyr243, 261–263, and Lys273; these read DGSS and YLY. Glu279 is a binding site for Mg(2+).

Belongs to the FBPase class 1 family. In terms of assembly, homotetramer. Mg(2+) is required as a cofactor.

The protein resides in the cytoplasm. It catalyses the reaction beta-D-fructose 1,6-bisphosphate + H2O = beta-D-fructose 6-phosphate + phosphate. It functions in the pathway carbohydrate biosynthesis; gluconeogenesis. The protein is Fructose-1,6-bisphosphatase class 1 of Amoebophilus asiaticus (strain 5a2).